The chain runs to 278 residues: Multidrug-efflux transporter 1 regulator (278 aa).

Residues 5–75 form the HTH merR-type domain; sequence YYSIGEVSKL…LEEMKKAQDL (71 aa). The segment at residues 8 to 27 is a DNA-binding region (H-T-H motif); it reads IGEVSKLANVSIKALRYYDK.

Binds DNA as a homodimer.

In terms of biological role, activates transcription of the bmr gene in response to structurally dissimilar drugs. Binds rhodamine as an inducer. In Bacillus subtilis (strain 168), this protein is Multidrug-efflux transporter 1 regulator (bmrR).